Consider the following 443-residue polypeptide: 26S proteasome regulatory subunit 4 homolog A (443 aa).

Disordered regions lie at residues 1 to 55 and 87 to 108; these read MGQG…LPTV and RLKPQEEKAEEDRSKVDDLRGT. Composition is skewed to basic and acidic residues over residues 12–28 and 87–106; these read QGDRKPDGGDKKEKKFE and RLKPQEEKAEEDRSKVDDLR. 229 to 236 contributes to the ATP binding site; it reads GEPGTGKT. Residues K296 and K433 each participate in a glycyl lysine isopeptide (Lys-Gly) (interchain with G-Cter in ubiquitin) cross-link.

Belongs to the AAA ATPase family. As to quaternary structure, component of the 19S regulatory particle (RP/PA700) base subcomplex of the 26S proteasome. The 26S proteasome is composed of a core protease (CP), known as the 20S proteasome, capped at one or both ends by the 19S regulatory particle (RP/PA700). The RP/PA700 complex is composed of at least 17 different subunits in two subcomplexes, the base and the lid, which form the portions proximal and distal to the 20S proteolytic core, respectively. Required for innate immunity. Interacts with UNI. Preferentially expressed in the root and shoot apical meristem.

The protein localises to the cytoplasm. The protein resides in the P-body. It is found in the nucleus. In terms of biological role, the 26S protease is involved in the ATP-dependent degradation of ubiquitinated proteins. The regulatory (or ATPase) complex confers ATP dependency and substrate specificity to the 26S complex. Interacts with transit peptides of proteins targeted to the chloroplast, and may be involved in the degradation of unimported plastid protein precursors. Is required for the maintenance of postembryonic root and shoot meristems. Has a specific role in the regulation of organs size. Acts redundantly with RPT2B in the regulation of gametogenesis. With RPT2B plays a critical role in 26S proteasome assembly. Acts as an upstream signaling component for inducing both defense and morphological phenotypes in the constitutive active uni-1D mutant. Acts as a negative regulator of endoreduplication in trichome cells. May function after the completion of the third endoreduplication step (8C to 16C) mediated by RHL1. Acts as a negative regulator of transcriptional gene silencing (TGS) at specific endogenous genes through DNA methylation. Promotes post-transcriptional gene silencing (PTGS) by limiting the degradation of transgene aberrant RNAs by the RNA quality control (RQC) machinery, thus favoring their entry into cytoplasmic siRNA bodies where they can trigger PTGS. Involved in tolerance to zinc deficiency, possibly through alleviation of oxidative stresses or processing of poly-ubiquitinated proteins. Required for resistance to the fungal pathogen Golovinomyces cichoracearum. The sequence is that of 26S proteasome regulatory subunit 4 homolog A from Arabidopsis thaliana (Mouse-ear cress).